The sequence spans 236 residues: CO-responsive transcriptional regulator RcoM (236 aa).

The PAS domain occupies 1–64 (MDDFAYNLRR…PLRPKVAVLL (64 aa)). Residue His-52 participates in heme binding. In terms of domain architecture, HTH LytTR-type spans 131 to 236 (VPLGLGETTE…VTRLRGLLAI (106 aa)).

It depends on heme as a cofactor.

Activates the expression of the CowN protein in response to carbon monoxide (CO). Is required to sustain N(2)-dependent growth in the presence of low levels of carbon monoxide (CO). This Rhodospirillum rubrum (strain ATCC 11170 / ATH 1.1.1 / DSM 467 / LMG 4362 / NCIMB 8255 / S1) protein is CO-responsive transcriptional regulator RcoM (rcoM).